Consider the following 64-residue polypeptide: MAKRDQLTGKGPLSGNTRSHAMNHSKRRWNVNLQKATIKTENGSQRVLVSAKTLKTLKKHNLLA.

Residues 1–27 (MAKRDQLTGKGPLSGNTRSHAMNHSKR) form a disordered region.

The protein belongs to the bacterial ribosomal protein bL28 family.

This Ureaplasma parvum serovar 3 (strain ATCC 27815 / 27 / NCTC 11736) protein is Large ribosomal subunit protein bL28.